The sequence spans 861 residues: MARTVCGCSWALIFIIMSLLVKAKIDVCKRGDVTVQPSHVISLGSAVNISCSLKPRQGCLQVSSLNKLILYRFHRRIHFQRGHSLSSQVTGLPLGTTLFVCKLACSSKEEIRICGAEISVGVVPEQPQNVSCMQKGERGTVACSWDRGRDTHLYTAYTLQLNGPKNLTWQKQCSDYYCDSLDLGINLPPESPESSYTAQVTAINSLGTASSLPSTFTFLDVVRPLPPWDIRIKCVNASVSTCTLQWRDEGLVLLNRLRYRPVYSRSWNMVNATNAKGRHDLVDLKPFTEYEFQISSKPHLQKGRWSDWSESLRTQTPEKEPTGMLDVWYMKQHIDYKRQQISLFWKNLSLSEARGKILHYQVTLQEVAEGNATLQNITERNSWTWTIPRTGIWAAAVSAANSKGSSLPTRINIADLCGAGLLAPQQVSANPEGSDNLLVKWTSPGEGATAVQEYVVEWRELHLRGGMQPPLSWLRSPPYNTSTLISDNIKPYICYEIRVHALSGDQGGCSSIRGDLKHKAPLSGPHINAISEEKGSILISWDEIPAQEQMGCILHYRIYWKERDSDSQPQLCEIPYRVSPKSHPINSLQPRVTYVLWMTALTAAGESPQGNEREFCLQGKANWSTFVAPSICIAVITVGVFSMRCFRQKVFVLLLALRPQWCSREIPDPANSTWAKKYPIVEEKKQLSLDRLLADWPTPEEPEPLVINEVLPQVTPVFRRPHHPNWPGKGQRLQGRHASEEDTGSSASSPPPPRALTAETGPAVDLYKVLGSRRPDSKPGNPVSHLTVLPVDYLPTHEGYLPSNMDYLPSHEAPITDSLEELPQHISLSVFPSNSLHPLTFSCGEKLALDQLKMGCGSLML.

The signal sequence occupies residues 1 to 23 (MARTVCGCSWALIFIIMSLLVKA). The Extracellular portion of the chain corresponds to 24 to 622 (KIDVCKRGDV…REFCLQGKAN (599 aa)). N-linked (GlcNAc...) asparagine glycans are attached at residues Asn-48, Asn-129, Asn-166, and Asn-271. Fibronectin type-III domains are found at residues 126-224 (QPQN…VVRP), 226-317 (PPWD…TQTP), 318-415 (EKEP…NIAD), 423-520 (APQQ…KHKA), and 521-620 (PLSG…LQGK). Positions 305 to 309 (WSDWS) match the WSXWS motif motif. Residues Asn-347, Asn-376, and Asn-480 are each glycosylated (N-linked (GlcNAc...) asparagine). Residues 623-643 (WSTFVAPSICIAVITVGVFSM) traverse the membrane as a helical segment. Residues 644-861 (RCFRQKVFVL…LKMGCGSLML (218 aa)) are Cytoplasmic-facing. The Box 1 motif motif lies at 662 to 670 (CSREIPDPA). Residues 718–761 (FRRPHHPNWPGKGQRLQGRHASEEDTGSSASSPPPPRALTAETG) form a disordered region. Tyr-800 is modified (phosphotyrosine).

It belongs to the type I cytokine receptor family. Type 2 subfamily. As to quaternary structure, heterodimer/heterooligomer; disulfide-linked. The functional high affinity IL12 receptor is composed of I12RB1 and IL12RB2. Il12RB2 binds JAK2 (via its N-terminal) through a membrane-proximal region of the cytoplasmic domain. Post-translationally, on IL12 stimulation, phosphorylated on C-terminal tyrosine residues.

Its subcellular location is the membrane. In terms of biological role, receptor for interleukin-12. This subunit is the signaling component coupling to the JAK2/STAT4 pathway. The sequence is that of Interleukin-12 receptor subunit beta-2 (IL12RB2) from Sus scrofa (Pig).